The sequence spans 200 residues: MIGRMVGLEPSSRSGVLEECRECRAIVMKGDGVQTPLHKGDSILGGEGACLMRYAAWTLISAVDVVYCSLETRESVSLTFNPDGQVIVVPFMFKGYNIAALPTTKFGDLKKDTKQIENVVSFLRSDICYAVWEFLVSSVQYKDDDRFERLFDERMRGYLRNISEGTSKVYMRGNKTFSELLEMVCGRMLECSGRVAGGGA.

Belongs to the UPF0329 family.

The sequence is that of UPF0329 protein ECU06_1670 from Encephalitozoon cuniculi (strain GB-M1) (Microsporidian parasite).